The sequence spans 86 residues: Small ribosomal subunit protein uS15 (86 aa).

The span at M1–E10 shows a compositional bias: polar residues. Residues M1–S21 form a disordered region.

Belongs to the universal ribosomal protein uS15 family. Part of the 30S ribosomal subunit. Forms a bridge to the 50S subunit in the 70S ribosome, contacting the 23S rRNA.

Functionally, one of the primary rRNA binding proteins, it binds directly to 16S rRNA where it helps nucleate assembly of the platform of the 30S subunit by binding and bridging several RNA helices of the 16S rRNA. Its function is as follows. Forms an intersubunit bridge (bridge B4) with the 23S rRNA of the 50S subunit in the ribosome. The chain is Small ribosomal subunit protein uS15 from Xylella fastidiosa (strain 9a5c).